The sequence spans 161 residues: Allophycocyanin alpha-B chain (161 aa).

Asn71 carries the N4-methylasparagine modification. Residue Cys81 participates in (2R,3E)-phycocyanobilin binding.

This sequence belongs to the phycobiliprotein family. In terms of processing, contains one covalently linked bilin chromophore.

The protein resides in the plastid. It localises to the chloroplast thylakoid membrane. In terms of biological role, allophycocyanin is a photosynthetic bile pigment-protein complex with maximum absorption at approximately 650 nanometers. This chain is Allophycocyanin alpha-B chain (apcD), found in Pyropia yezoensis (Susabi-nori).